The primary structure comprises 180 residues: UPF0227 protein YcfP (180 aa).

This sequence belongs to the UPF0227 family.

This is UPF0227 protein YcfP from Salmonella arizonae (strain ATCC BAA-731 / CDC346-86 / RSK2980).